The following is a 237-amino-acid chain: Large ribosomal subunit protein uL1 (237 aa).

This sequence belongs to the universal ribosomal protein uL1 family. In terms of assembly, part of the 50S ribosomal subunit.

Its function is as follows. Binds directly to 23S rRNA. The L1 stalk is quite mobile in the ribosome, and is involved in E site tRNA release. Protein L1 is also a translational repressor protein, it controls the translation of the L11 operon by binding to its mRNA. The chain is Large ribosomal subunit protein uL1 from Myxococcus xanthus (strain DK1622).